Reading from the N-terminus, the 247-residue chain is Type III pantothenate kinase (247 aa).

ATP is bound at residue 7-14; sequence AIGNSRWH. Substrate contacts are provided by residues tyrosine 91 and 95-98; that span reads GLDR. Aspartate 97 (proton acceptor) is an active-site residue. Aspartate 117 contributes to the K(+) binding site. Threonine 120 contacts ATP.

This sequence belongs to the type III pantothenate kinase family. In terms of assembly, homodimer. NH4(+) serves as cofactor. The cofactor is K(+).

The protein resides in the cytoplasm. It carries out the reaction (R)-pantothenate + ATP = (R)-4'-phosphopantothenate + ADP + H(+). It functions in the pathway cofactor biosynthesis; coenzyme A biosynthesis; CoA from (R)-pantothenate: step 1/5. Catalyzes the phosphorylation of pantothenate (Pan), the first step in CoA biosynthesis. This Synechococcus sp. (strain ATCC 27144 / PCC 6301 / SAUG 1402/1) (Anacystis nidulans) protein is Type III pantothenate kinase.